The primary structure comprises 214 residues: Peroxiredoxin-5, mitochondrial (214 aa).

The transit peptide at 1-52 (MGLAGVCALRRSAGYILVGGAGGQSAAAAARRYSEGEWASGGVRSFSRAAAA) directs the protein to the mitochondrion. Residues 56–214 (IKVGDAIPAV…SLAPNIISQL (159 aa)) form the Thioredoxin domain. Residue Lys75 is modified to N6-acetyllysine. Lys83 is modified (N6-acetyllysine; alternate). Residue Lys83 is modified to N6-succinyllysine; alternate. The Cysteine sulfenic acid (-SOH) intermediate role is filled by Cys100. Cys100 carries the S-palmitoyl cysteine lipid modification. Residues Cys100 and Cys204 are joined by a disulfide bond. An N6-succinyllysine modification is found at Lys116. Residues Ser171 and Ser182 each carry the phosphoserine modification. Positions 212–214 (SQL) match the Microbody targeting signal motif.

It belongs to the peroxiredoxin family. Prx5 subfamily. Monomer. Post-translationally, S-palmitoylated. Palmitoylation occurs on the active site, inhibiting its reactivity; therefore PRDX5 palmitoylation status determines its antioxidant capacity. In terms of processing, S-palmitoylated. Depalmitoylated by ABHD10. As to expression, widely expressed.

It is found in the mitochondrion. Its subcellular location is the cytoplasm. The protein resides in the peroxisome matrix. The catalysed reaction is a hydroperoxide + [thioredoxin]-dithiol = an alcohol + [thioredoxin]-disulfide + H2O. Functionally, thiol-specific peroxidase that catalyzes the reduction of hydrogen peroxide and organic hydroperoxides to water and alcohols, respectively. Plays a role in cell protection against oxidative stress by detoxifying peroxides and as sensor of hydrogen peroxide-mediated signaling events. In Homo sapiens (Human), this protein is Peroxiredoxin-5, mitochondrial.